The following is a 258-amino-acid chain: Octanoyltransferase (258 aa).

The BPL/LPL catalytic domain maps to 42 to 226 (NLGADTLLLL…AVVAALDGAL (185 aa)). Substrate contacts are provided by residues 80–87 (RGGKITWH), 156–158 (AIG), and 169–171 (GFS). Cysteine 187 acts as the Acyl-thioester intermediate in catalysis.

Belongs to the LipB family.

The protein resides in the cytoplasm. The enzyme catalyses octanoyl-[ACP] + L-lysyl-[protein] = N(6)-octanoyl-L-lysyl-[protein] + holo-[ACP] + H(+). It functions in the pathway protein modification; protein lipoylation via endogenous pathway; protein N(6)-(lipoyl)lysine from octanoyl-[acyl-carrier-protein]: step 1/2. Functionally, catalyzes the transfer of endogenously produced octanoic acid from octanoyl-acyl-carrier-protein onto the lipoyl domains of lipoate-dependent enzymes. Lipoyl-ACP can also act as a substrate although octanoyl-ACP is likely to be the physiological substrate. This chain is Octanoyltransferase, found in Rhodococcus opacus (strain B4).